The following is a 301-amino-acid chain: ATP synthase gamma chain (301 aa).

This sequence belongs to the ATPase gamma chain family. F-type ATPases have 2 components, CF(1) - the catalytic core - and CF(0) - the membrane proton channel. CF(1) has five subunits: alpha(3), beta(3), gamma(1), delta(1), epsilon(1). CF(0) has three main subunits: a, b and c.

Its subcellular location is the cell inner membrane. Functionally, produces ATP from ADP in the presence of a proton gradient across the membrane. The gamma chain is believed to be important in regulating ATPase activity and the flow of protons through the CF(0) complex. The protein is ATP synthase gamma chain of Helicobacter pylori (strain Shi470).